We begin with the raw amino-acid sequence, 455 residues long: Bleomycin hydrolase (455 aa).

At Met1 the chain carries N-acetylmethionine. Residues Cys73 and His372 contribute to the active site. Position 391 is an N6-acetyllysine (Lys391). Asn396 is an active-site residue.

It belongs to the peptidase C1 family. As to quaternary structure, homohexamer. Interacts with NUDT12 (via ANK repeats).

It is found in the cytoplasm. Its subcellular location is the cytoplasmic granule. It carries out the reaction Inactivates bleomycin B2 (a cytotoxic glycometallopeptide) by hydrolysis of a carboxyamide bond of beta-aminoalanine, but also shows general aminopeptidase activity. The specificity varies somewhat with source, but amino acid arylamides of Met, Leu and Ala are preferred.. Functionally, the normal physiological role of BLM hydrolase is unknown, but it catalyzes the inactivation of the antitumor drug BLM (a glycopeptide) by hydrolyzing the carboxamide bond of its B-aminoalaninamide moiety thus protecting normal and malignant cells from BLM toxicity. This Mus musculus (Mouse) protein is Bleomycin hydrolase (Blmh).